We begin with the raw amino-acid sequence, 129 residues long: uncharacterized protein (129 aa).

2 C2H2-type zinc fingers span residues 75-99 (FVCP…YTEH) and 101-124 (KVCP…CKKH).

Functionally, essential for virus function. This is an uncharacterized protein from Saccharolobus solfataricus (Sulfolobus solfataricus).